We begin with the raw amino-acid sequence, 106 residues long: Large ribosomal subunit protein P1 (106 aa).

Residues alanine 66–alanine 76 show a composition bias toward low complexity. Residues alanine 66 to glycine 106 form a disordered region. Residues alanine 77–serine 93 are compositionally biased toward basic and acidic residues.

It belongs to the eukaryotic ribosomal protein P1/P2 family. In terms of assembly, part of the 50S ribosomal subunit. Homodimer, it forms part of the ribosomal stalk which helps the ribosome interact with GTP-bound translation factors. Forms a heptameric uL10/P0(P1)2(P1)2(P1)2 complex, where uL10/P0 forms an elongated spine to which the P1 dimers bind in a sequential fashion.

Functionally, forms part of the ribosomal stalk, playing a central role in the interaction of the ribosome with GTP-bound translation factors. This Saccharolobus solfataricus (strain ATCC 35092 / DSM 1617 / JCM 11322 / P2) (Sulfolobus solfataricus) protein is Large ribosomal subunit protein P1.